The following is a 1174-amino-acid chain: K(+) efflux antiporter 2, chloroplastic (1174 aa).

Residues 1-57 (MDFASSVQRQSMFHGGADFASYCLPNRMISAKLCPKGLGGTRFWDPMIDSKVRSAIR) constitute a chloroplast transit peptide. Topologically, residues 58–565 (SKRNVSYRSS…MFPQQEVNEE (508 aa)) are stromal. The segment at 119-141 (GSDDREVTFSKEEKDTREQDSAP) is disordered. Residues 142 to 350 (SLEELRDLLN…ALQRAEKTLF (209 aa)) are a coiled coil. Position 170 is an N6-acetyllysine; by NSI (lysine 170). A compositionally biased stretch (basic and acidic residues) spans 420–448 (EAEGEAEKSKNVVLTKKQEVQKDLPRESS). Positions 420 to 457 (EAEGEAEKSKNVVLTKKQEVQKDLPRESSSHNGTKTSL) are disordered. A helical transmembrane segment spans residues 566–586 (EASLLDVLWLLLASVIFVPLF). The Chloroplast intermembrane segment spans residues 587 to 592 (QKIPGG). A helical membrane pass occupies residues 593–613 (SPVLGYLAAGILIGPYGLSII). Over 614 to 620 (RNVHGTK) the chain is Stromal. Residues 621–641 (AIAEFGVVFLLFNIGLELSVE) form a helical membrane-spanning segment. Topologically, residues 642–648 (RLSSMKK) are chloroplast intermembrane. A helical transmembrane segment spans residues 649–669 (YVFGLGSAQVLVTAAVIGLIT). Residues 670 to 678 (HYVAGQAGP) lie on the Stromal side of the membrane. A helical membrane pass occupies residues 679 to 699 (AAIVIGNGLALSSTAVVLQVL). Over 700-713 (QERGESTSRHGRAT) the chain is Chloroplast intermembrane. Residues 714 to 734 (FSVLLFQDLAVVVLLILIPLI) traverse the membrane as a helical segment. Residues 735 to 746 (SPNSSKGGIGFQ) are Stromal-facing. Residues 747–767 (AIAEALGLAAIKAAVAITGII) form a helical membrane-spanning segment. At 768 to 807 (AGGRLLLRPIYKQIAENRNAEIFSANTLLVILGTSLLTAR) the chain is on the chloroplast intermembrane side. Residues 808–828 (AGLSMALGAFLAGLLLAETEF) form a helical membrane-spanning segment. Residues 829–841 (SLQVESDIAPYRG) are Stromal-facing. A helical transmembrane segment spans residues 842–862 (LLLGLFFMTVGMSIDPKLLLA). At 863 to 865 (NFP) the chain is on the chloroplast intermembrane side. Residues 866–886 (LIMGTLGLLLVGKTILVVIIG) traverse the membrane as a helical segment. At 887–898 (KLFGISIISAVR) the chain is on the stromal side. The helical transmembrane segment at 899-919 (VGLLLAPGGEFAFVAFGEAVN) threads the bilayer. Residues 920–928 (QGIMTPQLS) lie on the Chloroplast intermembrane side of the membrane. The helical transmembrane segment at 929–949 (SLLFLVVGISMALTPWLAAGG) threads the bilayer. Residues 950–1174 (QLIASRFELQ…NQIIEGTLAI (225 aa)) lie on the Stromal side of the membrane. The RCK N-terminal domain maps to 975–1092 (QGHIIICGFG…EKAGATAVVP (118 aa)). Positions 1141-1174 (SLGYGFSRSTSKPKPPSPSETSDDNQIIEGTLAI) are disordered.

Belongs to the monovalent cation:proton antiporter 2 (CPA2) transporter (TC 2.A.37) family. KEA (TC 2.A.37.1) subfamily. Acetylated at Lys-170 by the stromal acetyltransferase enzyme NSI. In terms of tissue distribution, detected in leaves, stems and flowers. Expressed in shoots and roots. Mainly localized to leaf veins, hypocotyls, mesophylls and guard cells. Accumulates at high levels in small and dividing plastids (at protein level).

It is found in the plastid. The protein resides in the chloroplast inner membrane. Its subcellular location is the plastid inner membrane. The catalysed reaction is K(+)(in) + H(+)(out) = K(+)(out) + H(+)(in). Repressed by sodium ions Na(+). Electroneutral K(+)/H(+) efflux antiporter modulating monovalent cation and pH homeostasis in plastids, especially during plastid division and thylakoid membrane formation. Transports K(+) and Cs(+) preferentially relative to Na(+) or Li(+). May function in osmotic adjustment. Collaboratively with KEA1, adjusts alkaline stromal pH upon light to dark transitions in plastids. Together with KEA1, critical for chloroplast development, including chloroplast RNA-metabolism (e.g. rRNA maturation, polysome loading and RNA-protein interactions) and plastid gene expression (PGE), ion homeostasis, and photosynthesis. Contributes, during early seedling development, to the regulation of photosynthesis and abscisic acid- (ABA-) mediated primary root growth in a sucrose-dependent manner. Involved in the regulation of reactive oxygen and nitrogen species (ROS and RNS) metabolism. Required in roots for rapid hyperosmotic-induced Ca(2+) responses and for osmo-sensory potentiation in hyperosmotic conditions. May counteract resilience to drought and salt stress, involving photorespiratory pathway and stomata closure. In Arabidopsis thaliana (Mouse-ear cress), this protein is K(+) efflux antiporter 2, chloroplastic.